We begin with the raw amino-acid sequence, 225 residues long: Phosphoenolpyruvate guanylyltransferase (225 aa).

Phosphoenolpyruvate is bound by residues threonine 150, glycine 166, and serine 169. Positions 167–186 (PESARGHANSGARPLNGQWP) are disordered.

The protein belongs to the CofC family.

The catalysed reaction is phosphoenolpyruvate + GTP + H(+) = enolpyruvoyl-2-diphospho-5'-guanosine + diphosphate. It functions in the pathway cofactor biosynthesis; coenzyme F420 biosynthesis. Guanylyltransferase that catalyzes the activation of phosphoenolpyruvate (PEP) as enolpyruvoyl-2-diphospho-5'-guanosine, via the condensation of PEP with GTP. It is involved in the biosynthesis of coenzyme F420, a hydride carrier cofactor. This chain is Phosphoenolpyruvate guanylyltransferase, found in Rhodococcus erythropolis (strain PR4 / NBRC 100887).